The primary structure comprises 148 residues: Large ribosomal subunit protein uL15 (148 aa).

Residues 1-61 are disordered; that stretch reads MELNNLKPAI…GGQMPMQRRL (61 aa). Positions 30-39 are enriched in basic residues; it reads TATKGHKGQK.

The protein belongs to the universal ribosomal protein uL15 family. As to quaternary structure, part of the 50S ribosomal subunit.

Functionally, binds to the 23S rRNA. The polypeptide is Large ribosomal subunit protein uL15 (Geobacter metallireducens (strain ATCC 53774 / DSM 7210 / GS-15)).